The chain runs to 157 residues: Large ribosomal subunit protein uL11 (157 aa).

Belongs to the universal ribosomal protein uL11 family. Part of the ribosomal stalk of the 50S ribosomal subunit. Interacts with L10 and the large rRNA to form the base of the stalk. L10 forms an elongated spine to which L12 dimers bind in a sequential fashion forming a multimeric L10(L12)X complex.

In terms of biological role, forms part of the ribosomal stalk which helps the ribosome interact with GTP-bound translation factors. This Methanocorpusculum labreanum (strain ATCC 43576 / DSM 4855 / Z) protein is Large ribosomal subunit protein uL11.